The primary structure comprises 281 residues: MPGAPSPSAPSIALNDENTMPVLGMGVAGLSDDETERAVSAALEIGCRLIDTAAAYGNEAAVGRAIAASGIPRAELFVTTKVATADHGFTASREACKASLDRLGLDYVDLYLIHWPAPAAGKYVDAFGGLIQARGEGFTRSIGVSNFTEEHVSNVIDLTFVTPAVNQVELHPLLNQDELRKANAQHNVVTQSYTPLALGQLADNPTVTSIAGEYGKTPTQVLLRWNLQLGNAVIFGSSNAEHIATNLDVFEFELASQHMDAINGLNDGTRLREDPMTFAGV.

Y56 (proton donor) is an active-site residue. NADPH is bound by residues L196, I234, S237, T245, N246, and R272.

The protein belongs to the aldo/keto reductase family.

The chain is Aldo-keto reductase MMAR_1744 from Mycobacterium marinum (strain ATCC BAA-535 / M).